A 376-amino-acid polypeptide reads, in one-letter code: Carbamoyl phosphate synthase small chain (376 aa).

The segment at 1–183 (MSKAVLVLED…PDGPPGVSRF (183 aa)) is CPSase. L-glutamine is bound by residues S46, G232, and G234. The Glutamine amidotransferase type-1 domain occupies 184–376 (TVAALDLGIK…FVELMAGEGR (193 aa)). C260 acts as the Nucleophile in catalysis. Residues F261, Q264, N302, G304, and F305 each contribute to the L-glutamine site. Active-site residues include H350 and E352.

The protein belongs to the CarA family. Composed of two chains; the small (or glutamine) chain promotes the hydrolysis of glutamine to ammonia, which is used by the large (or ammonia) chain to synthesize carbamoyl phosphate. Tetramer of heterodimers (alpha,beta)4.

The catalysed reaction is hydrogencarbonate + L-glutamine + 2 ATP + H2O = carbamoyl phosphate + L-glutamate + 2 ADP + phosphate + 2 H(+). The enzyme catalyses L-glutamine + H2O = L-glutamate + NH4(+). It participates in amino-acid biosynthesis; L-arginine biosynthesis; carbamoyl phosphate from bicarbonate: step 1/1. Its pathway is pyrimidine metabolism; UMP biosynthesis via de novo pathway; (S)-dihydroorotate from bicarbonate: step 1/3. Its function is as follows. Small subunit of the glutamine-dependent carbamoyl phosphate synthetase (CPSase). CPSase catalyzes the formation of carbamoyl phosphate from the ammonia moiety of glutamine, carbonate, and phosphate donated by ATP, constituting the first step of 2 biosynthetic pathways, one leading to arginine and/or urea and the other to pyrimidine nucleotides. The small subunit (glutamine amidotransferase) binds and cleaves glutamine to supply the large subunit with the substrate ammonia. This chain is Carbamoyl phosphate synthase small chain, found in Mycobacterium bovis (strain ATCC BAA-935 / AF2122/97).